A 137-amino-acid polypeptide reads, in one-letter code: Basic phospholipase A2 homolog Pgo-K49 (137 aa).

The first 16 residues, 1 to 16, serve as a signal peptide directing secretion; that stretch reads MRTLLIVAVLLVGVEG. 7 cysteine pairs are disulfide-bonded: Cys42/Cys131, Cys44/Cys60, Cys59/Cys111, Cys65/Cys137, Cys66/Cys104, Cys73/Cys97, and Cys91/Cys102. Residues 121 to 133 are important for membrane-damaging activities in eukaryotes and bacteria; heparin-binding; the sequence is KKYKIHMKFFCKK.

As to expression, expressed by the venom gland.

The protein resides in the secreted. In terms of biological role, snake venom phospholipase A2 homolog that lacks enzymatic activity. Is myotoxic. A model of myotoxic mechanism has been proposed: an apo Lys49-PLA2 is activated by the entrance of a hydrophobic molecule (e.g. fatty acid) at the hydrophobic channel of the protein leading to a reorientation of a monomer. This reorientation causes a transition between 'inactive' to 'active' states, causing alignment of C-terminal and membrane-docking sites (MDoS) side-by-side and putting the membrane-disruption sites (MDiS) in the same plane, exposed to solvent and in a symmetric position for both monomers. The MDoS region stabilizes the toxin on membrane by the interaction of charged residues with phospholipid head groups. Subsequently, the MDiS region destabilizes the membrane with penetration of hydrophobic residues. This insertion causes a disorganization of the membrane, allowing an uncontrolled influx of ions (i.e. calcium and sodium), and eventually triggering irreversible intracellular alterations and cell death. This chain is Basic phospholipase A2 homolog Pgo-K49, found in Cerrophidion godmani (Porthidium godmani).